The primary structure comprises 554 residues: Raftlin (554 aa).

Gly2 carries N-myristoyl glycine lipidation. Residue Cys3 is the site of S-palmitoyl cysteine attachment. A phosphoserine mark is found at Ser183 and Ser199. Disordered stretches follow at residues 192–249 (CTLG…NEAG), 441–488 (KKRE…DQFS), and 504–554 (GRAS…TEAN). Composition is skewed to basic and acidic residues over residues 198–209 (SSLENDTPKAAE) and 475–487 (QAEENEKNLEDQF). Phosphoserine occurs at positions 507 and 530. A compositionally biased stretch (basic and acidic residues) spans 526–542 (HNRDSVALRHSNPRAEA).

It belongs to the raftlin family. In terms of assembly, interacts with TLR4; the interaction occurs in response to lipopolysaccharide stimulation. Interacts with CLTC; the interaction occurs in response to pathogens. Interacts with AP2A1 and AP2B1. In terms of tissue distribution, expressed in T-cells, B-cells, thymus and spleen (at protein level). Expressed in dendritic cells, macrophages, heart, lung and small intestine.

Its subcellular location is the cell membrane. The protein localises to the cytoplasm. It is found in the membrane raft. It localises to the endosome. The protein resides in the early endosome. In terms of biological role, involved in protein trafficking via association with clathrin and AP2 complex. Upon bacterial lipopolysaccharide stimulation, mediates internalization of TLR4 to endosomes in dendritic cells and macrophages, and internalization of poly(I:C) to TLR3-positive endosomes in myeloid dendritic cells and epithelial cells; resulting in activation of TICAM1-mediated signaling and subsequent IFNB1 production. Involved in T-cell antigen receptor-mediated signaling by regulating tyrosine kinase LCK localization, T-cell dependent antibody production and cytokine secretion. May regulate B-cell antigen receptor-mediated signaling. May play a pivotal role in the formation and/or maintenance of lipid rafts. The chain is Raftlin (Rftn1) from Mus musculus (Mouse).